Here is a 408-residue protein sequence, read N- to C-terminus: Guanine nucleotide-binding protein alpha-14 subunit (408 aa).

Residues 38–45 (HSEELEAK), 78–85 (GGPSSGKS), 201–205 (NRISK), 216–222 (VHSRKAT), 241–245 (DVGGQ), 285–288 (FPNF), 325–328 (NKVD), and A380 contribute to the GTP site. One can recognise a G-alpha domain in the interval 70–408 (SHIKILILGG…KANSKATGLS (339 aa)). The tract at residues 73–86 (KILILGGPSSGKST) is G1 motif. S85 provides a ligand contact to Mg(2+). The tract at residues 214 to 222 (DIVHSRKAT) is G2 motif. T222 provides a ligand contact to Mg(2+). The G3 motif stretch occupies residues 237–246 (LLMVDVGGQR). A G4 motif region spans residues 321-328 (LLFFNKVD). A G5 motif region spans residues 378–383 (TTATNT).

Belongs to the G-alpha family. As to quaternary structure, g proteins are composed of 3 units; alpha, beta and gamma. The alpha chain contains the guanine nucleotide binding site.

In terms of biological role, guanine nucleotide-binding proteins (G proteins) are involved as modulators or transducers in various transmembrane signaling systems. The protein is Guanine nucleotide-binding protein alpha-14 subunit (gpa-14) of Caenorhabditis briggsae.